A 234-amino-acid polypeptide reads, in one-letter code: uncharacterized protein (234 aa).

Residues 13–32 traverse the membrane as a helical segment; sequence KSINYYIFFFQYTLVYNTIQ. Disordered regions lie at residues 102–130 and 159–185; these read HSKTTSLPFSSSSPQSSSSSSSSSSSSNS and ESDSKSDSEFDSESNSDFDSESESEYE. A compositionally biased stretch (low complexity) spans 103-130; it reads SKTTSLPFSSSSPQSSSSSSSSSSSSNS. The span at 167–185 shows a compositional bias: acidic residues; it reads EFDSESNSDFDSESESEYE.

Its subcellular location is the membrane. This is an uncharacterized protein from Dictyostelium discoideum (Social amoeba).